Here is a 283-residue protein sequence, read N- to C-terminus: Phosphatidylglycerol--prolipoprotein diacylglyceryl transferase (283 aa).

7 helical membrane passes run 21–41, 60–80, 95–115, 124–144, 176–196, 203–223, and 239–259; these read LAIR…LWLA, LLFA…VLFY, VWTG…AMLW, FFTI…AGRL, SQLY…NWFI, GAVS…VEYV, and MGQI…VWAF. An a 1,2-diacyl-sn-glycero-3-phospho-(1'-sn-glycerol)-binding site is contributed by arginine 143.

This sequence belongs to the Lgt family.

It is found in the cell inner membrane. It catalyses the reaction L-cysteinyl-[prolipoprotein] + a 1,2-diacyl-sn-glycero-3-phospho-(1'-sn-glycerol) = an S-1,2-diacyl-sn-glyceryl-L-cysteinyl-[prolipoprotein] + sn-glycerol 1-phosphate + H(+). Its pathway is protein modification; lipoprotein biosynthesis (diacylglyceryl transfer). Catalyzes the transfer of the diacylglyceryl group from phosphatidylglycerol to the sulfhydryl group of the N-terminal cysteine of a prolipoprotein, the first step in the formation of mature lipoproteins. This is Phosphatidylglycerol--prolipoprotein diacylglyceryl transferase from Aliivibrio salmonicida (strain LFI1238) (Vibrio salmonicida (strain LFI1238)).